The primary structure comprises 317 residues: MKIVFMGTPDFSVPVLRRLIEDGYTIAAVVTQPDRPVGRKRVLTPPPVKVEAEKHQIPVLQPEKIRDEAELERLFSFEPDLIVTAAFGQILPNALLEYPKHGCINVHASLLPKYRGGAPIHQAIIDGEKETGITIMYMAEKLDAGDILTQVTVPIADDDHVGSLHNKLSEAGAALLAKTIPPLIKGELQSIPQDDQLATFAPNITREKEEIDWRKEGERIYNQIRGLHPWPVAYTLWNGKPMKIWWAEKVSSPKKEAPGTVIALEENGFLVATGDETALKVTDLQPAGKKRMLARDFLRGAGSQLSVGSVLGGQDGS.

109 to 112 (SLLP) contacts (6S)-5,6,7,8-tetrahydrofolate.

This sequence belongs to the Fmt family.

It carries out the reaction L-methionyl-tRNA(fMet) + (6R)-10-formyltetrahydrofolate = N-formyl-L-methionyl-tRNA(fMet) + (6S)-5,6,7,8-tetrahydrofolate + H(+). In terms of biological role, attaches a formyl group to the free amino group of methionyl-tRNA(fMet). The formyl group appears to play a dual role in the initiator identity of N-formylmethionyl-tRNA by promoting its recognition by IF2 and preventing the misappropriation of this tRNA by the elongation apparatus. In Halalkalibacterium halodurans (strain ATCC BAA-125 / DSM 18197 / FERM 7344 / JCM 9153 / C-125) (Bacillus halodurans), this protein is Methionyl-tRNA formyltransferase.